Reading from the N-terminus, the 373-residue chain is Chaperone protein DnaJ (373 aa).

The J domain occupies 4-68 (NYYQILGVSK…QKRAAYDRLG (65 aa)). A CR-type zinc finger spans residues 136 to 214 (GIEKNINFSS…CHGMGRYHKQ (79 aa)). Positions 149, 152, 166, 169, 188, 191, 202, and 205 each coordinate Zn(2+). CXXCXGXG motif repeat units follow at residues 149–156 (CDTCHGSG), 166–173 (CDACSGVG), 188–195 (CHKCQGNG), and 202–209 (CKKCHGMG).

The protein belongs to the DnaJ family. Homodimer. It depends on Zn(2+) as a cofactor.

It localises to the cytoplasm. In terms of biological role, participates actively in the response to hyperosmotic and heat shock by preventing the aggregation of stress-denatured proteins and by disaggregating proteins, also in an autonomous, DnaK-independent fashion. Unfolded proteins bind initially to DnaJ; upon interaction with the DnaJ-bound protein, DnaK hydrolyzes its bound ATP, resulting in the formation of a stable complex. GrpE releases ADP from DnaK; ATP binding to DnaK triggers the release of the substrate protein, thus completing the reaction cycle. Several rounds of ATP-dependent interactions between DnaJ, DnaK and GrpE are required for fully efficient folding. Also involved, together with DnaK and GrpE, in the DNA replication of plasmids through activation of initiation proteins. This is Chaperone protein DnaJ from Rickettsia rickettsii (strain Iowa).